The primary structure comprises 234 residues: MKFGKLLKRQIEQSLPEWRDKFVSYKELKRIVASISGSPADEAAFVAALAADIDKIDSFFLEQEEEFVIRHRELQEAIKKAAEAAAEVAGIRREIVDFHGEMVLLLSYSSINYIGVGKILKKHDKRTGGALAAPVAEAVRERRHFFKTETVSRMVRECEAMMAEAAVLPAEAAPEALAAAAEHGIFRNTVAALLTMEDVRRGSSTHGRHSLPPLTLPDSDWLRSFQPPSPIPIQ.

Residues 1–137 (MKFGKLLKRQ…GGALAAPVAE (137 aa)) form the SPX domain. The interval 202–234 (GSSTHGRHSLPPLTLPDSDWLRSFQPPSPIPIQ) is disordered.

Predominantly expressed in roots and leaves.

Its function is as follows. May be involved in maintaining cellular Pi homeostasis when plants are exposed to an external change in Pi. This chain is SPX domain-containing protein 6, found in Oryza sativa subsp. japonica (Rice).